The primary structure comprises 29 residues: Cycloviolacin-O21 (29 aa).

The segment at residues 1-29 is a cross-link (cyclopeptide (Gly-Asn)); the sequence is GLPVCGETCVTGSCYTPGCTCSWPVCTRN. Disulfide bonds link Cys5/Cys19, Cys9/Cys21, and Cys14/Cys26.

Post-translationally, this is a cyclic peptide. As to expression, expressed in leaves, petals, petioles, and runners but not in roots (at protein level).

Functionally, probably participates in a plant defense mechanism. This is Cycloviolacin-O21 from Viola odorata (Sweet violet).